A 198-amino-acid polypeptide reads, in one-letter code: Ribonuclease HII (198 aa).

An RNase H type-2 domain is found at 6-195 (RRVAGVDEVG…VHHMLYQDKN (190 aa)). A divalent metal cation contacts are provided by D12, E13, and D103.

This sequence belongs to the RNase HII family. Mn(2+) serves as cofactor. Requires Mg(2+) as cofactor.

Its subcellular location is the cytoplasm. It carries out the reaction Endonucleolytic cleavage to 5'-phosphomonoester.. In terms of biological role, endonuclease that specifically degrades the RNA of RNA-DNA hybrids. The protein is Ribonuclease HII of Roseobacter denitrificans (strain ATCC 33942 / OCh 114) (Erythrobacter sp. (strain OCh 114)).